The sequence spans 189 residues: Orotate phosphoribosyltransferase (189 aa).

Residues arginine 99, lysine 100, lysine 103, histidine 105, and 126–134 (EDVITTGGS) contribute to the 5-phospho-alpha-D-ribose 1-diphosphate site. The orotate site is built by threonine 130 and arginine 158.

Belongs to the purine/pyrimidine phosphoribosyltransferase family. PyrE subfamily. In terms of assembly, homodimer. Mg(2+) is required as a cofactor.

It catalyses the reaction orotidine 5'-phosphate + diphosphate = orotate + 5-phospho-alpha-D-ribose 1-diphosphate. It functions in the pathway pyrimidine metabolism; UMP biosynthesis via de novo pathway; UMP from orotate: step 1/2. Functionally, catalyzes the transfer of a ribosyl phosphate group from 5-phosphoribose 1-diphosphate to orotate, leading to the formation of orotidine monophosphate (OMP). The protein is Orotate phosphoribosyltransferase of Thermosynechococcus vestitus (strain NIES-2133 / IAM M-273 / BP-1).